The following is an 85-amino-acid chain: UPF0297 protein Cbei_1105 (85 aa).

Belongs to the UPF0297 family.

The sequence is that of UPF0297 protein Cbei_1105 from Clostridium beijerinckii (strain ATCC 51743 / NCIMB 8052) (Clostridium acetobutylicum).